The following is a 313-amino-acid chain: MNMIRTAMLLAFMTALFMAVGYLIGGSGGMMIALVIAAAMNLFSYWNADKMVLRMHHAVEVDERSAPEYYRIVSDLAQRAGLPMPRVYVIDNPQPNAFATGRNPQNAAVAATTGLLHSLTPEEVAGVMAHELAHVQNRDTLTMTITATLAGAISMLGNFAFFFGGNRDNNNPFGFIGILVAMIVAPLAAMVVQMAISRTREYAADRRGAEICGQPLWLASALAKISRAAHRVVNVDAERNPATAHLFIINPLSGQRMDNLFSTHPNTENRIAALQAMAGEFGNAPPASLREDEPGADGPWGRSASRARKGPWS.

2 helical membrane passes run 7–24 (AMLLAFMTALFMAVGYLI) and 29–46 (GMMIALVIAAAMNLFSYW). His130 provides a ligand contact to Zn(2+). The active site involves Glu131. Residue His134 participates in Zn(2+) binding. Transmembrane regions (helical) follow at residues 145–165 (ITATLAGAISMLGNFAFFFGG) and 172–192 (PFGFIGILVAMIVAPLAAMVV). Glu201 is a Zn(2+) binding site. A disordered region spans residues 282–313 (GNAPPASLREDEPGADGPWGRSASRARKGPWS).

Belongs to the peptidase M48B family. It depends on Zn(2+) as a cofactor.

It localises to the cell inner membrane. The polypeptide is Protease HtpX homolog (Chelativorans sp. (strain BNC1)).